Reading from the N-terminus, the 360-residue chain is Galactoside alpha-(1,2)-fucosyltransferase 1 (360 aa).

Over 1 to 8 (MWAPGHHH) the chain is Cytoplasmic. Residues 9–27 (LCLIFLLTCVFACVFFLLI) traverse the membrane as a helical; Signal-anchor for type II membrane protein segment. Over 28–360 (HQNLFHSGLD…GINADLSPLQ (333 aa)) the chain is Lumenal. 3 N-linked (GlcNAc...) asparagine glycosylation sites follow: Asn-65, Asn-301, and Asn-327.

The protein belongs to the glycosyltransferase 11 family. Expressed in brain, intestine and kidney.

It localises to the golgi apparatus. It is found in the golgi stack membrane. It catalyses the reaction a ganglioside GM1 + GDP-beta-L-fucose = a ganglioside Fuc-GM1 + GDP + H(+). The enzyme catalyses a beta-D-galactosyl-(1-&gt;4)-N-acetyl-beta-D-glucosaminyl derivative + GDP-beta-L-fucose = an alpha-L-Fuc-(1-&gt;2)-beta-D-Gal-(1-&gt;4)-beta-D-GlcNAc derivative + GDP + H(+). It carries out the reaction a ganglioside GA1 + GDP-beta-L-fucose = a ganglioside Fuc-GA1 + GDP + H(+). The catalysed reaction is a beta-D-Gal-(1-&gt;3)-beta-D-GlcNAc-(1-&gt;3)-beta-D-Gal-(1-&gt;4)-beta-D-Glc-(1&lt;-&gt;1')-Cer(d18:1(4E)) + GDP-beta-L-fucose = alpha-L-fucosyl-(1-&gt;2)- beta-D-galactosyl-(1-&gt;3)-N-acetyl-beta-D-glucosaminyl-(1-&gt;3)-beta-D-galactosyl-(1-&gt;4)-beta-D-glucosyl-(1&lt;-&gt;1')-N-acylsphing-4-enine + GDP + H(+). It catalyses the reaction a neolactoside nLc4Cer(d18:1(4E)) + GDP-beta-L-fucose = a neolactoside IV(2)-alpha-Fuc-nLc4Cer(d18:1(4E)) + GDP + H(+). The enzyme catalyses beta-D-galactosyl-(1-&gt;3)-N-acetyl-D-galactosamine + GDP-beta-L-fucose = alpha-L-fucosyl-(1-&gt;2)-beta-D-galactosyl-(1-&gt;3)-N-acetyl-D-galactosamine + GDP + H(+). It participates in protein modification; protein glycosylation. Functionally, catalyzes the transfer of L-fucose, from a guanosine diphosphate-beta-L-fucose, to the terminal galactose residue of glycoconjugates through an alpha(1,2) linkage leading to H antigen synthesis that is an intermediate substrate in the synthesis of ABO blood group antigens. H antigen is essential for maturation of the glomerular layer of the main olfactory bulb, in cell migration and early cell-cell contacts during tumor associated angiogenesis. Preferentially fucosylates soluble lactose and to a lesser extent, fucosylates glycolipids gangliosides GA1 and GM1a. The chain is Galactoside alpha-(1,2)-fucosyltransferase 1 from Bos taurus (Bovine).